The chain runs to 561 residues: Arginine--tRNA ligase (561 aa).

The short motif at 128–138 is the 'HIGH' region element; the sequence is ANPTGPLHVGH.

Belongs to the class-I aminoacyl-tRNA synthetase family. Monomer.

The protein resides in the cytoplasm. The catalysed reaction is tRNA(Arg) + L-arginine + ATP = L-arginyl-tRNA(Arg) + AMP + diphosphate. The chain is Arginine--tRNA ligase from Leptothrix cholodnii (strain ATCC 51168 / LMG 8142 / SP-6) (Leptothrix discophora (strain SP-6)).